Reading from the N-terminus, the 375-residue chain is Succinyl-diaminopimelate desuccinylase (375 aa).

Histidine 66 serves as a coordination point for Zn(2+). Residue aspartate 68 is part of the active site. Aspartate 99 is a Zn(2+) binding site. Catalysis depends on glutamate 133, which acts as the Proton acceptor. Residues glutamate 134, glutamate 162, and histidine 348 each contribute to the Zn(2+) site.

It belongs to the peptidase M20A family. DapE subfamily. Homodimer. Zn(2+) is required as a cofactor. Co(2+) serves as cofactor.

The enzyme catalyses N-succinyl-(2S,6S)-2,6-diaminopimelate + H2O = (2S,6S)-2,6-diaminopimelate + succinate. Its pathway is amino-acid biosynthesis; L-lysine biosynthesis via DAP pathway; LL-2,6-diaminopimelate from (S)-tetrahydrodipicolinate (succinylase route): step 3/3. Its function is as follows. Catalyzes the hydrolysis of N-succinyl-L,L-diaminopimelic acid (SDAP), forming succinate and LL-2,6-diaminopimelate (DAP), an intermediate involved in the bacterial biosynthesis of lysine and meso-diaminopimelic acid, an essential component of bacterial cell walls. This chain is Succinyl-diaminopimelate desuccinylase, found in Klebsiella pneumoniae (strain 342).